The primary structure comprises 836 residues: Pentatricopeptide repeat-containing protein At2g39620 (836 aa).

23 PPR repeats span residues 1 to 35, 36 to 62, 63 to 98, 99 to 133, 134 to 164, 165 to 199, 200 to 230, 233 to 263, 264 to 298, 299 to 333, 334 to 364, 365 to 399, 400 to 434, 435 to 465, 466 to 500, 501 to 535, 536 to 566, 568 to 602, 603 to 637, 638 to 668, 669 to 703, 704 to 734, and 740 to 770; these read MPIN…GLKP, HNQL…VRDP, GVVL…GIDP, DKYS…GLES, DVYI…MHVK, DVVT…CVDI, DHVS…VIKK, IFAF…VWRK, DESS…DVRM, NKVA…GLIG, DVSV…IEDR, DVVS…HIKP, NAVT…DIES, ELET…LPIK, DAVA…GVCP, DSRT…GFDS, ECHV…CGFE, STVS…KFQP, NAVT…GFCS, QTPV…ISNK, YIVS…ELKP, DSVS…MGER, and EVEH…MRVK. The tract at residues 775-836 is type E motif; degenerate; it reads VWGALLNSSR…KVPACSWIEV (62 aa).

Belongs to the PPR family. PCMP-E subfamily.

This Arabidopsis thaliana (Mouse-ear cress) protein is Pentatricopeptide repeat-containing protein At2g39620 (PCMP-E33).